Here is a 241-residue protein sequence, read N- to C-terminus: MRHQQTERQDPSQPLSRQHGTYRQIFHPEQLITGKEDAANNYAWGHYTIGKEFIDLLLDRIRKLADQCTGLQGFLVFHSLGRGTGSDVTSFLMEWLSVNYGKKSKLGFSIYPAPQVSTAMVQPYNSILTTHTTLEHSDCAFMVDNKAIYDICHCNLDIERPTYTNLNRLISQIVSSITASLRFDGALNVDLTEFQTNLVSYLTSTSPWPPMHQSSLQKRYTTSSCWWQRLPMPALSLPTRW.

The span at 1–10 (MRHQQTERQD) shows a compositional bias: basic and acidic residues. The disordered stretch occupies residues 1–20 (MRHQQTERQDPSQPLSRQHG). Aspartate 10 contacts GTP. Aspartate 10 serves as a coordination point for Mg(2+). Over residues 11–20 (PSQPLSRQHG) the composition is skewed to polar residues. The GTP site is built by serine 79, glycine 83, threonine 84, threonine 118, asparagine 145, and asparagine 167. Glutamate 193 is an active-site residue.

It belongs to the tubulin family. It depends on Mg(2+) as a cofactor. Some glutamate residues at the C-terminus are polyglutamylated, resulting in polyglutamate chains on the gamma-carboxyl group. Polyglutamylation plays a key role in microtubule severing by spastin (SPAST). SPAST preferentially recognizes and acts on microtubules decorated with short polyglutamate tails: severing activity by SPAST increases as the number of glutamates per tubulin rises from one to eight, but decreases beyond this glutamylation threshold. Glutamylation is also involved in cilia motility. Post-translationally, some glutamate residues at the C-terminus are monoglycylated but not polyglycylated due to the absence of functional TTLL10 in human. Monoglycylation is mainly limited to tubulin incorporated into cilia and flagella axonemes, which is required for their stability and maintenance. Flagella glycylation controls sperm motility. Both polyglutamylation and monoglycylation can coexist on the same protein on adjacent residues, and lowering glycylation levels increases polyglutamylation, and reciprocally.

The protein localises to the cytoplasm. It is found in the cytoskeleton. The enzyme catalyses GTP + H2O = GDP + phosphate + H(+). Its function is as follows. Tubulin is the major constituent of microtubules, a cylinder consisting of laterally associated linear protofilaments composed ofalpha- and beta-tubulin heterodimers. In Homo sapiens (Human), this protein is Tubulin-like protein alpha-4B (TUBA4B).